We begin with the raw amino-acid sequence, 228 residues long: Pyridoxal phosphate homeostasis protein (228 aa).

Lysine 35 is subject to N6-(pyridoxal phosphate)lysine.

This sequence belongs to the pyridoxal phosphate-binding protein YggS/PROSC family.

Pyridoxal 5'-phosphate (PLP)-binding protein, which is involved in PLP homeostasis. In Aquifex aeolicus (strain VF5), this protein is Pyridoxal phosphate homeostasis protein.